The following is a 488-amino-acid chain: Ribulose bisphosphate carboxylase large chain (488 aa).

Substrate is bound by residues Asn-127 and Thr-177. The Proton acceptor role is filled by Lys-179. Residue Lys-181 coordinates substrate. The Mg(2+) site is built by Lys-205, Asp-207, and Glu-208. At Lys-205 the chain carries N6-carboxylysine. His-297 functions as the Proton acceptor in the catalytic mechanism. Substrate contacts are provided by Arg-298, His-330, and Ser-382.

It belongs to the RuBisCO large chain family. Type I subfamily. In terms of assembly, heterohexadecamer of 8 large chains and 8 small chains. It depends on Mg(2+) as a cofactor.

The protein localises to the plastid. It is found in the chloroplast. The catalysed reaction is 2 (2R)-3-phosphoglycerate + 2 H(+) = D-ribulose 1,5-bisphosphate + CO2 + H2O. The enzyme catalyses D-ribulose 1,5-bisphosphate + O2 = 2-phosphoglycolate + (2R)-3-phosphoglycerate + 2 H(+). Functionally, ruBisCO catalyzes two reactions: the carboxylation of D-ribulose 1,5-bisphosphate, the primary event in carbon dioxide fixation, as well as the oxidative fragmentation of the pentose substrate in the photorespiration process. Both reactions occur simultaneously and in competition at the same active site. The chain is Ribulose bisphosphate carboxylase large chain from Porphyra purpurea (Red seaweed).